Here is a 557-residue protein sequence, read N- to C-terminus: Hydroxylamine reductase (557 aa).

Residues Cys-3, Cys-6, Cys-19, and Cys-26 each coordinate [4Fe-4S] cluster. Residues His-253, Glu-277, Cys-321, Cys-408, Cys-436, Cys-461, Glu-495, and Lys-497 each contribute to the hybrid [4Fe-2O-2S] cluster site. Position 408 is a cysteine persulfide (Cys-408).

It belongs to the HCP family. It depends on [4Fe-4S] cluster as a cofactor. Hybrid [4Fe-2O-2S] cluster serves as cofactor.

It is found in the cytoplasm. The catalysed reaction is A + NH4(+) + H2O = hydroxylamine + AH2 + H(+). Catalyzes the reduction of hydroxylamine to form NH(3) and H(2)O. The polypeptide is Hydroxylamine reductase (Acidiphilium cryptum (strain JF-5)).